The sequence spans 304 residues: Sulfate adenylyltransferase subunit 2 (304 aa).

It belongs to the PAPS reductase family. CysD subfamily. As to quaternary structure, heterodimer composed of CysD, the smaller subunit, and CysNC.

It catalyses the reaction sulfate + ATP + H(+) = adenosine 5'-phosphosulfate + diphosphate. It participates in sulfur metabolism; hydrogen sulfide biosynthesis; sulfite from sulfate: step 1/3. In terms of biological role, with CysN forms the ATP sulfurylase (ATPS) that catalyzes the adenylation of sulfate producing adenosine 5'-phosphosulfate (APS) and diphosphate, the first enzymatic step in sulfur assimilation pathway. APS synthesis involves the formation of a high-energy phosphoric-sulfuric acid anhydride bond driven by GTP hydrolysis by CysN coupled to ATP hydrolysis by CysD. In Xylella fastidiosa (strain Temecula1 / ATCC 700964), this protein is Sulfate adenylyltransferase subunit 2.